The primary structure comprises 332 residues: Adenosine deaminase (332 aa).

Zn(2+)-binding residues include H12 and H14. H14, D16, and G170 together coordinate substrate. H197 lines the Zn(2+) pocket. Residue E200 is the Proton donor of the active site. D278 contacts Zn(2+).

The protein belongs to the metallo-dependent hydrolases superfamily. Adenosine and AMP deaminases family. Adenosine deaminase subfamily. Zn(2+) is required as a cofactor.

It catalyses the reaction adenosine + H2O + H(+) = inosine + NH4(+). It carries out the reaction 2'-deoxyadenosine + H2O + H(+) = 2'-deoxyinosine + NH4(+). Its function is as follows. Catalyzes the hydrolytic deamination of adenosine and 2-deoxyadenosine. The chain is Adenosine deaminase from Clostridium perfringens (strain SM101 / Type A).